A 463-amino-acid chain; its full sequence is Adenosylhomocysteinase (463 aa).

The substrate site is built by Thr-54, Asp-128, and Glu-189. Residue 190–192 (TTT) participates in NAD(+) binding. Residues Lys-219 and Asp-223 each contribute to the substrate site. Residues Asn-224, 253–258 (GYGDVG), Glu-276, Asn-311, 332–334 (IGH), and Asn-377 contribute to the NAD(+) site.

Belongs to the adenosylhomocysteinase family. Requires NAD(+) as cofactor.

It localises to the cytoplasm. It carries out the reaction S-adenosyl-L-homocysteine + H2O = L-homocysteine + adenosine. The protein operates within amino-acid biosynthesis; L-homocysteine biosynthesis; L-homocysteine from S-adenosyl-L-homocysteine: step 1/1. May play a key role in the regulation of the intracellular concentration of adenosylhomocysteine. The protein is Adenosylhomocysteinase of Cereibacter sphaeroides (Rhodobacter sphaeroides).